An 863-amino-acid polypeptide reads, in one-letter code: Bifunctional uridylyltransferase/uridylyl-removing enzyme (863 aa).

Positions 1-328 (MLFPLSLSSP…SSNQATVIEQ (328 aa)) are uridylyltransferase. Residues 329-687 (LDDDFQLINQ…ISNRFSLGGT (359 aa)) form a uridylyl-removing region. An HD domain is found at 446–568 (VDEHTLRVML…VQNQVRLDYL (123 aa)). ACT domains are found at residues 688 to 772 (EVFI…PNRQ) and 794 to 863 (EMEL…RNIG).

Belongs to the GlnD family. Mg(2+) serves as cofactor.

It carries out the reaction [protein-PII]-L-tyrosine + UTP = [protein-PII]-uridylyl-L-tyrosine + diphosphate. The enzyme catalyses [protein-PII]-uridylyl-L-tyrosine + H2O = [protein-PII]-L-tyrosine + UMP + H(+). Uridylyltransferase (UTase) activity is inhibited by glutamine, while glutamine activates uridylyl-removing (UR) activity. Its function is as follows. Modifies, by uridylylation and deuridylylation, the PII regulatory proteins (GlnB and homologs), in response to the nitrogen status of the cell that GlnD senses through the glutamine level. Under low glutamine levels, catalyzes the conversion of the PII proteins and UTP to PII-UMP and PPi, while under higher glutamine levels, GlnD hydrolyzes PII-UMP to PII and UMP (deuridylylation). Thus, controls uridylylation state and activity of the PII proteins, and plays an important role in the regulation of nitrogen assimilation and metabolism. This chain is Bifunctional uridylyltransferase/uridylyl-removing enzyme, found in Haemophilus influenzae (strain PittEE).